Here is a 249-residue protein sequence, read N- to C-terminus: Exosome complex component Rrp41 (249 aa).

The protein belongs to the RNase PH family. Rrp41 subfamily. Component of the archaeal exosome complex. Forms a hexameric ring-like arrangement composed of 3 Rrp41-Rrp42 heterodimers. The hexameric ring associates with a trimer of Rrp4 and/or Csl4 subunits.

It localises to the cytoplasm. Functionally, catalytic component of the exosome, which is a complex involved in RNA degradation. Has 3'-&gt;5' exoribonuclease activity. Can also synthesize heteromeric RNA-tails. This Thermococcus kodakarensis (strain ATCC BAA-918 / JCM 12380 / KOD1) (Pyrococcus kodakaraensis (strain KOD1)) protein is Exosome complex component Rrp41.